Reading from the N-terminus, the 231-residue chain is Orotidine 5'-phosphate decarboxylase (231 aa).

Substrate-binding positions include aspartate 11, lysine 33, 60-69 (DLKFHDIPNT), threonine 120, arginine 181, glutamine 190, glycine 210, and arginine 211. Residue lysine 62 is the Proton donor of the active site.

It belongs to the OMP decarboxylase family. Type 1 subfamily. Homodimer.

It catalyses the reaction orotidine 5'-phosphate + H(+) = UMP + CO2. Its pathway is pyrimidine metabolism; UMP biosynthesis via de novo pathway; UMP from orotate: step 2/2. Functionally, catalyzes the decarboxylation of orotidine 5'-monophosphate (OMP) to uridine 5'-monophosphate (UMP). In Colwellia psychrerythraea (strain 34H / ATCC BAA-681) (Vibrio psychroerythus), this protein is Orotidine 5'-phosphate decarboxylase.